The sequence spans 675 residues: Polyphosphate kinase (675 aa).

N42 serves as a coordination point for ATP. The Mg(2+) site is built by R372 and R401. Catalysis depends on H431, which acts as the Phosphohistidine intermediate. Residues Y464, R558, and H586 each coordinate ATP.

Belongs to the polyphosphate kinase 1 (PPK1) family. Mg(2+) is required as a cofactor. An intermediate of this reaction is the autophosphorylated ppk in which a phosphate is covalently linked to a histidine residue through a N-P bond.

It carries out the reaction [phosphate](n) + ATP = [phosphate](n+1) + ADP. Functionally, catalyzes the reversible transfer of the terminal phosphate of ATP to form a long-chain polyphosphate (polyP). The sequence is that of Polyphosphate kinase from Helicobacter pylori (strain J99 / ATCC 700824) (Campylobacter pylori J99).